We begin with the raw amino-acid sequence, 309 residues long: MMSFLHIVFSILVVVAFILGNFANGFIALINFIAWVKRQKISSADQIIAALAVSRVGLLWVILLHWYSTVLNPTSSNLKVTIFISNAWAVTNHFSIWLAASLSIFYLLKIVNFSRLIFHHLKRKAKSVVLVIVLGSLFFLVCHLVMKSTYINVWTEEYEGNVTWKIKLRNAMHLSNLTVAMLANLIPFTLTLISFLLLIYSLCKHLKKMQLHGKGSQDPSTKIHIKALQTVTSFLILLAIYFLCLITSFWNSKMRPKEIVLMLCQAFGIIYPSFHSFILIWGNKTLKQTFLSVLWRVTCWAKGQNQSTP.

At 1–6 (MMSFLH) the chain is on the extracellular side. Residues 7-27 (IVFSILVVVAFILGNFANGFI) traverse the membrane as a helical segment. At 28 to 46 (ALINFIAWVKRQKISSADQ) the chain is on the cytoplasmic side. The helical transmembrane segment at 47 to 67 (IIAALAVSRVGLLWVILLHWY) threads the bilayer. Residues 68–79 (STVLNPTSSNLK) are Extracellular-facing. The chain crosses the membrane as a helical span at residues 80-100 (VTIFISNAWAVTNHFSIWLAA). Topologically, residues 101–125 (SLSIFYLLKIVNFSRLIFHHLKRKA) are cytoplasmic. The chain crosses the membrane as a helical span at residues 126-146 (KSVVLVIVLGSLFFLVCHLVM). Residues 147–178 (KSTYINVWTEEYEGNVTWKIKLRNAMHLSNLT) lie on the Extracellular side of the membrane. N161 and N176 each carry an N-linked (GlcNAc...) asparagine glycan. The helical transmembrane segment at 179–199 (VAMLANLIPFTLTLISFLLLI) threads the bilayer. The Cytoplasmic portion of the chain corresponds to 200 to 229 (YSLCKHLKKMQLHGKGSQDPSTKIHIKALQ). The helical transmembrane segment at 230-250 (TVTSFLILLAIYFLCLITSFW) threads the bilayer. Over 251–259 (NSKMRPKEI) the chain is Extracellular. Residues 260–280 (VLMLCQAFGIIYPSFHSFILI) form a helical membrane-spanning segment. Residues 281 to 309 (WGNKTLKQTFLSVLWRVTCWAKGQNQSTP) are Cytoplasmic-facing.

This sequence belongs to the G-protein coupled receptor T2R family.

The protein resides in the membrane. Its function is as follows. Receptor that may play a role in the perception of bitterness and is gustducin-linked. May play a role in sensing the chemical composition of the gastrointestinal content. The activity of this receptor may stimulate alpha gustducin, mediate PLC-beta-2 activation and lead to the gating of TRPM5. This chain is Taste receptor type 2 member 20 (TAS2R20), found in Gorilla gorilla gorilla (Western lowland gorilla).